The sequence spans 497 residues: MASLLDRYLRNISDKSQQNLASVAYLASLDHLLHAFPSIGQSIVQELKSQRSRLKMIASENFSSLSVQLAMGNLLTDKYCEGSPFKRFYSCCENVDAIEWECAETAKELFGAESAFVQPHSGADANLLAIMSIITQKIQSPAVQRLGYKTINDLPEQEYEALKAEMAQHKCLGPSLNSGGHLTHGTVRMNIMSKLMHCLPYEVNLDTELFDYDEIAKIAKEHKPTVLIAGYSSYSRRLNFATLKQIAEDCGAVLWVDMAHFAGLVAGGVFVGEENPMPYADIVTTTTHKTLRGPRGGLVLAKKEYANTLNKACPLMMGGPLPHVIAAKAIALKEAMTINFRKYAHKVVENARTLAEVFQRNGLRLLTGGTDNHMLIIDLTSLGVPGRIAEDMLTSVGIAVNRNTIPSDASGQWKTSGIRLGTPALTTLGMGSAEMEEVANIIVKVLRNITVRSNAESGSSKSEGELSEGIAQEARQRVADLLGRFPLYPEIDLETLV.

(6S)-5,6,7,8-tetrahydrofolate contacts are provided by residues Leu-176 and 180–182 (GHL). An N6-(pyridoxal phosphate)lysine modification is found at Lys-289.

Belongs to the SHMT family. In terms of assembly, homodimer. Pyridoxal 5'-phosphate serves as cofactor.

It localises to the cytoplasm. It carries out the reaction (6R)-5,10-methylene-5,6,7,8-tetrahydrofolate + glycine + H2O = (6S)-5,6,7,8-tetrahydrofolate + L-serine. It participates in one-carbon metabolism; tetrahydrofolate interconversion. Its pathway is amino-acid biosynthesis; glycine biosynthesis; glycine from L-serine: step 1/1. Catalyzes the reversible interconversion of serine and glycine with tetrahydrofolate (THF) serving as the one-carbon carrier. This reaction serves as the major source of one-carbon groups required for the biosynthesis of purines, thymidylate, methionine, and other important biomolecules. Also exhibits THF-independent aldolase activity toward beta-hydroxyamino acids, producing glycine and aldehydes, via a retro-aldol mechanism. The chain is Serine hydroxymethyltransferase from Chlamydia trachomatis serovar A (strain ATCC VR-571B / DSM 19440 / HAR-13).